Consider the following 312-residue polypeptide: Olfactory receptor 6C2 (312 aa).

Topologically, residues 1–23 (MKNHTVIRTFILLGLTGDPHLQV) are extracellular. Asn3 carries N-linked (GlcNAc...) asparagine glycosylation. The chain crosses the membrane as a helical span at residues 24–44 (LLFIFLFLTYMLSVTGNLTII). Topologically, residues 45–52 (TLTLVDHH) are cytoplasmic. A helical transmembrane segment spans residues 53–73 (LKTPMYFFLRNFSFLEVSFTT). Residues 74–97 (VCIPRFLYNISMGDNTITYNACAS) lie on the Extracellular side of the membrane. The N-linked (GlcNAc...) asparagine glycan is linked to Asn82. Cys95 and Cys187 are disulfide-bonded. The helical transmembrane segment at 98–118 (QIFFVILFGATEFFLLAAMSY) threads the bilayer. The Cytoplasmic segment spans residues 119–137 (DRYVAICKPLHYVVIMNNR). The helical transmembrane segment at 138–158 (VCTLLVLCCWVAGLMIIVPPL) threads the bilayer. Residues 159–195 (SLGLQLEFCDSNAIDHFSCDAGPLLKISCSDTWVIEQ) lie on the Extracellular side of the membrane. Residues 196–215 (MVILMAVFALIITLVCVILS) traverse the membrane as a helical segment. At 216–235 (YLYIVRTILKFPSVQQRKKA) the chain is on the cytoplasmic side. The helical transmembrane segment at 236-256 (FSTCSSHMIVVSIAYGSCIFI) threads the bilayer. The Extracellular segment spans residues 257 to 269 (YIKPSAKDEVAIN). The helical transmembrane segment at 270-290 (KGVSVLTTSVAPLLNPFIYTL) threads the bilayer. Over 291–312 (RNKQVKQAFSDSIKRIAFLSKK) the chain is Cytoplasmic.

Belongs to the G-protein coupled receptor 1 family.

The protein resides in the cell membrane. In terms of biological role, odorant receptor. In Homo sapiens (Human), this protein is Olfactory receptor 6C2 (OR6C2).